The chain runs to 268 residues: Protein MGF 300-1L (268 aa).

Residues 1-175 are Cytoplasmic-facing; it reads MVSLTTYCLK…QTFKTFYAKN (175 aa). Residues 176 to 193 form a helical membrane-spanning segment; the sequence is YSLSTLYCIFLAIYYKLY. Residues 194 to 268 lie on the Extracellular side of the membrane; that stretch reads MALRKMVKIY…MYAFSQNNFW (75 aa).

It belongs to the asfivirus MGF 300 family.

The protein localises to the host membrane. Functionally, plays a role in virus cell tropism, and may be required for efficient virus replication in macrophages. This African swine fever virus (isolate Tick/Malawi/Lil 20-1/1983) (ASFV) protein is Protein MGF 300-1L.